The primary structure comprises 238 residues: Ribonuclease PH (238 aa).

Phosphate contacts are provided by residues arginine 86 and 124–126 (GTR).

This sequence belongs to the RNase PH family. In terms of assembly, homohexameric ring arranged as a trimer of dimers.

It carries out the reaction tRNA(n+1) + phosphate = tRNA(n) + a ribonucleoside 5'-diphosphate. Phosphorolytic 3'-5' exoribonuclease that plays an important role in tRNA 3'-end maturation. Removes nucleotide residues following the 3'-CCA terminus of tRNAs; can also add nucleotides to the ends of RNA molecules by using nucleoside diphosphates as substrates, but this may not be physiologically important. Probably plays a role in initiation of 16S rRNA degradation (leading to ribosome degradation) during starvation. The sequence is that of Ribonuclease PH from Sphingopyxis alaskensis (strain DSM 13593 / LMG 18877 / RB2256) (Sphingomonas alaskensis).